Here is a 188-residue protein sequence, read N- to C-terminus: Elongation factor P (188 aa).

Belongs to the elongation factor P family.

It localises to the cytoplasm. Its pathway is protein biosynthesis; polypeptide chain elongation. Involved in peptide bond synthesis. Stimulates efficient translation and peptide-bond synthesis on native or reconstituted 70S ribosomes in vitro. Probably functions indirectly by altering the affinity of the ribosome for aminoacyl-tRNA, thus increasing their reactivity as acceptors for peptidyl transferase. The polypeptide is Elongation factor P (Mycoplasma mobile (strain ATCC 43663 / 163K / NCTC 11711) (Mesomycoplasma mobile)).